A 234-amino-acid polypeptide reads, in one-letter code: Uridylate kinase (234 aa).

9-12 lines the ATP pocket; the sequence is KLSG. Gly-51 contributes to the UMP binding site. ATP-binding residues include Gly-52 and Arg-56. UMP is bound by residues Asp-71 and 132-139; that span reads CGNPFFTT. ATP-binding residues include Thr-159, Tyr-165, and Asp-168.

This sequence belongs to the UMP kinase family. As to quaternary structure, homohexamer.

It localises to the cytoplasm. It carries out the reaction UMP + ATP = UDP + ADP. Its pathway is pyrimidine metabolism; CTP biosynthesis via de novo pathway; UDP from UMP (UMPK route): step 1/1. With respect to regulation, inhibited by UTP. In terms of biological role, catalyzes the reversible phosphorylation of UMP to UDP. The sequence is that of Uridylate kinase from Prochlorococcus marinus (strain MIT 9515).